Consider the following 110-residue polypeptide: U1-lycotoxin-Ls1hh (110 aa).

The first 20 residues, M1–A20, serve as a signal peptide directing secretion. Residues E21 to R44 constitute a propeptide that is removed on maturation. 4 disulfide bridges follow: C47–C62, C54–C71, C61–C89, and C73–C87.

It belongs to the neurotoxin 19 (CSTX) family. 03 subfamily. As to expression, expressed by the venom gland.

The protein resides in the secreted. The chain is U1-lycotoxin-Ls1hh from Lycosa singoriensis (Wolf spider).